The primary structure comprises 323 residues: Ribonuclease Z (323 aa).

7 residues coordinate Zn(2+): histidine 62, histidine 64, aspartate 66, histidine 67, histidine 144, aspartate 215, and histidine 273. Aspartate 66 acts as the Proton acceptor in catalysis.

It belongs to the RNase Z family. As to quaternary structure, homodimer. The cofactor is Zn(2+).

It catalyses the reaction Endonucleolytic cleavage of RNA, removing extra 3' nucleotides from tRNA precursor, generating 3' termini of tRNAs. A 3'-hydroxy group is left at the tRNA terminus and a 5'-phosphoryl group is left at the trailer molecule.. Zinc phosphodiesterase, which displays some tRNA 3'-processing endonuclease activity. Probably involved in tRNA maturation, by removing a 3'-trailer from precursor tRNA. The sequence is that of Ribonuclease Z from Synechococcus sp. (strain WH7803).